Consider the following 294-residue polypeptide: Melanocortin receptor 5 (294 aa).

Residues 1 to 29 (FLDLQLNATEGNVSGPSVGNTSSPCEDMG) lie on the Extracellular side of the membrane. N-linked (GlcNAc...) asparagine glycosylation is found at Asn7, Asn12, and Asn20. The helical transmembrane segment at 30–53 (IEVEVFLTLGLISLLENILVIGAI) threads the bilayer. Residues 54–65 (ARNKNLHVPMYF) are Cytoplasmic-facing. The helical transmembrane segment at 66 to 89 (FVCSLAVADMLVSLSNSWETITIY) threads the bilayer. At 90–106 (LIANKHLVLSDTSVRHL) the chain is on the extracellular side. A helical transmembrane segment spans residues 107–130 (DNVFDSMICISLVASMCSLLAVAV). Residues 131–147 (DRYVTIFYALRYQHLMT) are Cytoplasmic-facing. The helical transmembrane segment at 148–171 (GRRCGAIIAGIWALCTGCGPVFIV) threads the bilayer. Residues 172–178 (YYESTYV) are Extracellular-facing. A helical transmembrane segment spans residues 179 to 203 (VVCLVAMFLTMLLLMASLYAHMFLQ). At 204 to 231 (ARAHVRRIAALPGYRSARQRTSMKGAVT) the chain is on the cytoplasmic side. Residues 232 to 257 (LAMLLGVFIVCWAPFFLHLILMISCP) form a helical membrane-spanning segment. At 258 to 265 (QNLYCSCF) the chain is on the extracellular side. A helical membrane pass occupies residues 266–289 (MSHFNMYLILIMCNSVIDPLIYAF). The Cytoplasmic segment spans residues 290–294 (RSQEK).

The protein belongs to the G-protein coupled receptor 1 family.

The protein resides in the cell membrane. Functionally, receptor for MSH (alpha, beta and gamma) and ACTH. The activity of this receptor is mediated by G proteins which activate adenylate cyclase. This receptor is a possible mediator of the immunomodulation properties of melanocortins. The polypeptide is Melanocortin receptor 5 (MC5R) (Sus scrofa (Pig)).